The sequence spans 224 residues: UPF0758 protein Neut_0782 (224 aa).

Positions I102–I224 constitute an MPN domain. Zn(2+) contacts are provided by H173, H175, and D186. The JAMM motif motif lies at H173 to D186.

It belongs to the UPF0758 family.

This is UPF0758 protein Neut_0782 from Nitrosomonas eutropha (strain DSM 101675 / C91 / Nm57).